The primary structure comprises 1141 residues: Tetratricopeptide repeat protein 17 (1141 aa).

A TPR 1 repeat occupies 295–328 (FTSYYTLGNIYAMLGEYNHSVLCYDHALQARPGF). Positions 340–382 (CQQKLEQKLEAQHRSLQRTLNELKEYQKQHDHYLRQQEILEKH) form a coiled coil. 5 TPR repeats span residues 619-652 (WLIL…APLQ), 689-722 (PLTF…TTKC), 1014-1048 (SWVL…APHQ), 1051-1084 (DVPL…APHF), and 1085-1118 (AVNH…QPEF).

This sequence belongs to the TTC17 family. In terms of assembly, interacts with CATIP. In terms of tissue distribution, expressed in germ cells as well as in somatic cells of the testis (at protein level).

Its subcellular location is the cytoplasm. The protein localises to the cell membrane. It localises to the cytoskeleton. In terms of biological role, plays a role in primary ciliogenesis by modulating actin polymerization. This Homo sapiens (Human) protein is Tetratricopeptide repeat protein 17 (TTC17).